The following is a 148-amino-acid chain: Large ribosomal subunit protein bL9 (148 aa).

Belongs to the bacterial ribosomal protein bL9 family.

Its function is as follows. Binds to the 23S rRNA. The sequence is that of Large ribosomal subunit protein bL9 from Streptomyces avermitilis (strain ATCC 31267 / DSM 46492 / JCM 5070 / NBRC 14893 / NCIMB 12804 / NRRL 8165 / MA-4680).